We begin with the raw amino-acid sequence, 347 residues long: Probable tRNA N6-adenosine threonylcarbamoyltransferase (347 aa).

A divalent metal cation is bound by residues His-109, His-113, and Tyr-130. Residues 130–134, Asp-162, Gly-177, Glu-181, and Asn-277 contribute to the substrate site; that span reads YVSGG. Asp-305 lines the a divalent metal cation pocket.

This sequence belongs to the KAE1 / TsaD family. As to quaternary structure, component of the EKC/KEOPS complex; the whole complex dimerizes. A divalent metal cation is required as a cofactor.

It localises to the cytoplasm. It is found in the nucleus. The enzyme catalyses L-threonylcarbamoyladenylate + adenosine(37) in tRNA = N(6)-L-threonylcarbamoyladenosine(37) in tRNA + AMP + H(+). Component of the EKC/KEOPS complex that is required for the formation of a threonylcarbamoyl group on adenosine at position 37 (t(6)A37) in tRNAs that read codons beginning with adenine. The complex is probably involved in the transfer of the threonylcarbamoyl moiety of threonylcarbamoyl-AMP (TC-AMP) to the N6 group of A37. Likely plays a direct catalytic role in this reaction, but requires other protein(s) of the complex to fulfill this activity. The polypeptide is Probable tRNA N6-adenosine threonylcarbamoyltransferase (Drosophila melanogaster (Fruit fly)).